We begin with the raw amino-acid sequence, 965 residues long: Collagenase ColQ1 (965 aa).

The first 30 residues, 1 to 30 (MNKKSKINKVMLSISTMALSLGALQAPASA), serve as a signal peptide directing secretion. Residues 31 to 93 (EEKVPYNVLK…KAAVKQVKES (63 aa)) constitute a propeptide that is removed on maturation. Positions 94-366 (YSMADLNKMN…AVEQITTNYN (273 aa)) are activator domain. An S1 metalloprotease domain region spans residues 94-765 (YSMADLNKMN…VFHGIAKDDG (672 aa)). Residues 376-645 (DLEKIRKEGK…MQQLIDNQDK (270 aa)) are catalytic subdomain. H501 lines the Zn(2+) pocket. E502 is an active-site residue. Residues H505 and E533 each coordinate Zn(2+). The helper subdomain stretch occupies residues 653-765 (DDYLAEHAPK…VFHGIAKDDG (113 aa)). In terms of domain architecture, PKD spans 769–850 (APTVNINGPY…ESKSETTVTV (82 aa)). The disordered stretch occupies residues 842–867 (SKSETTVTVKDGSLTESEPNNRPEEA). A compositionally biased stretch (polar residues) spans 845 to 859 (ETTVTVKDGSLTESE). Positions 853-965 (GSLTESEPNN…GDGTYKLSVK (113 aa)) are collagen-binding domain.

It belongs to the peptidase M9B family. Collagenase subfamily. Ca(2+) is required as a cofactor. Zn(2+) serves as cofactor.

It localises to the secreted. It catalyses the reaction Digestion of native collagen in the triple helical region at Xaa-|-Gly bonds. With synthetic peptides, a preference is shown for Gly at P3 and P1', Pro and Ala at P2 and P2', and hydroxyproline, Ala or Arg at P3'.. Strongly inhibited by EDTA. Not inhibited by E-64 and PMSF, broad-spectrum cysteine and serine protease inhibitors. Functionally, acts as a true collagenase, which is highly active and cleaves natively folded collagen. In vitro, can also cleave gelatin and the synthetic peptide FALGPA (furylacryloyl-Leu-Gly-Pro-Ala). Causes damage on dermal collagen (COL), resulting in gaps in the tissue, which might lead to an accelerated bacterial infiltration and penetration into deeper sites of the host. The polypeptide is Collagenase ColQ1 (Bacillus cereus (strain Q1)).